The chain runs to 554 residues: Outer envelope protein 61 (554 aa).

The Cytoplasmic portion of the chain corresponds to 1–525 (MFNGLMDPEM…GMEKAKKAKK (525 aa)). 2 TPR repeats span residues 103–136 (AQML…LKEI) and 180–213 (VKAL…SPED). Disordered stretches follow at residues 245–269 (TEEN…AQGV) and 395–439 (APAS…PSAP). Positions 254 to 263 (ENKKPSKEAN) are enriched in basic and acidic residues. Low complexity predominate over residues 412–423 (SLGASGSSSGNS). The chain crosses the membrane as a helical span at residues 526–546 (WLFGKGGLIFAILMLVLAMVL). Topologically, residues 547 to 554 (HRLGYIGN) are lumenal.

In terms of assembly, interacts (via TPR region) with HSP70-1, but not with HSP90-2. Interacts with ERDJ2A and ERDJ2B. In the ER membrane, associates with ERDJ2 in membrane complexes of 140 and 200 kDa and specifically interacts with the HSP70 and HSP90 chaperones via its TPR domain. As to expression, ubiquitous. Highest expression in leaves and lowest in roots.

The protein resides in the endoplasmic reticulum membrane. Its subcellular location is the plastid. It is found in the chloroplast outer membrane. Functionally, plays a role in protein import into the endoplasmic reticulum (ER). May function as chaperone docking protein during post-translational protein translocation into the ER. Chaperone receptor mediating Hsp70-dependent protein targeting to chloroplasts. Interacts specifically with some chloroplast precursors, but not with mitochondrial precursors. Able to select precursors for delivery to the chloroplast translocase independently of Hsp70. This is Outer envelope protein 61 (OEP61) from Arabidopsis thaliana (Mouse-ear cress).